The sequence spans 319 residues: Acetyl esterase (319 aa).

The short motif at 91–93 (HGG) is the Involved in the stabilization of the negatively charged intermediate by the formation of the oxyanion hole element. Residues Ser165, Asp262, and His292 contribute to the active site.

This sequence belongs to the 'GDXG' lipolytic enzyme family. In terms of assembly, homodimer. Interacts with MalT and MelA.

The protein localises to the cytoplasm. In terms of biological role, displays esterase activity towards short chain fatty esters (acyl chain length of up to 8 carbons). Able to hydrolyze triacetylglycerol (triacetin) and tributyrylglycerol (tributyrin), but not trioleylglycerol (triolein) or cholesterol oleate. Negatively regulates MalT activity by antagonizing maltotriose binding. Inhibits MelA galactosidase activity. The chain is Acetyl esterase from Escherichia coli O139:H28 (strain E24377A / ETEC).